Reading from the N-terminus, the 480-residue chain is Cysteine--tRNA ligase (480 aa).

Residue Cys29 participates in Zn(2+) binding. The short motif at 31-41 is the 'HIGH' region element; the sequence is VTVYDHCHIGH. Positions 209, 234, and 238 each coordinate Zn(2+). Residues 266–270 carry the 'KMSKS' region motif; sequence KMSKS. ATP is bound at residue Lys269.

Belongs to the class-I aminoacyl-tRNA synthetase family. In terms of assembly, monomer. The cofactor is Zn(2+).

The protein resides in the cytoplasm. It carries out the reaction tRNA(Cys) + L-cysteine + ATP = L-cysteinyl-tRNA(Cys) + AMP + diphosphate. The chain is Cysteine--tRNA ligase from Geobacter sp. (strain M21).